The primary structure comprises 862 residues: Chaperone protein ClpB 1 (862 aa).

One can recognise a Clp R domain in the interval 5 to 147 (AEQFTEQAWA…KEAITAVRGN (143 aa)). Repeat regions lie at residues 8–72 (FTEQ…LQRL) and 84–147 (LGRS…VRGN). The tract at residues 160-341 (ESLAKYGRDL…RRFQQVLVDQ (182 aa)) is NBD1. 207-214 (GEPGVGKT) contributes to the ATP binding site. The tract at residues 342–550 (PTVPDTISIL…IAEVIAKWTG (209 aa)) is linker. Residues 392–526 (IDLVDESAAR…QEDLLEDEDG (135 aa)) adopt a coiled-coil conformation. The segment at 560–771 (EMEKLLQLED…RLDDQIIFRS (212 aa)) is NBD2. 610–617 (GPTGVGKT) serves as a coordination point for ATP. The tract at residues 772–862 (LEKEELRRIV…DAGDDKLSIS (91 aa)) is C-terminal.

This sequence belongs to the ClpA/ClpB family. As to quaternary structure, homohexamer. The oligomerization is ATP-dependent.

The protein localises to the cytoplasm. Its function is as follows. Part of a stress-induced multi-chaperone system, it is involved in the recovery of the cell from heat-induced damage, in cooperation with DnaK, DnaJ and GrpE. Acts before DnaK, in the processing of protein aggregates. Protein binding stimulates the ATPase activity; ATP hydrolysis unfolds the denatured protein aggregates, which probably helps expose new hydrophobic binding sites on the surface of ClpB-bound aggregates, contributing to the solubilization and refolding of denatured protein aggregates by DnaK. The chain is Chaperone protein ClpB 1 (clpB1) from Parasynechococcus marenigrum (strain WH8102).